We begin with the raw amino-acid sequence, 372 residues long: N-methyl-L-tryptophan oxidase (372 aa).

4-34 (DLIIIGSGSVGAAAGYYATRAGLNVLMTDAH) contributes to the FAD binding site. Cysteine 308 carries the post-translational modification S-8alpha-FAD cysteine.

Belongs to the MSOX/MTOX family. MTOX subfamily. As to quaternary structure, monomer. Requires FAD as cofactor.

The catalysed reaction is N(alpha)-methyl-L-tryptophan + O2 + H2O = L-tryptophan + formaldehyde + H2O2. Functionally, catalyzes the oxidative demethylation of N-methyl-L-tryptophan. The polypeptide is N-methyl-L-tryptophan oxidase (Escherichia coli O157:H7).